The following is a 406-amino-acid chain: Tryptophan synthase beta chain (406 aa).

Residue Lys-95 is modified to N6-(pyridoxal phosphate)lysine.

The protein belongs to the TrpB family. As to quaternary structure, tetramer of two alpha and two beta chains. Pyridoxal 5'-phosphate is required as a cofactor.

The catalysed reaction is (1S,2R)-1-C-(indol-3-yl)glycerol 3-phosphate + L-serine = D-glyceraldehyde 3-phosphate + L-tryptophan + H2O. The protein operates within amino-acid biosynthesis; L-tryptophan biosynthesis; L-tryptophan from chorismate: step 5/5. In terms of biological role, the beta subunit is responsible for the synthesis of L-tryptophan from indole and L-serine. This chain is Tryptophan synthase beta chain, found in Azotobacter vinelandii (strain DJ / ATCC BAA-1303).